A 168-amino-acid chain; its full sequence is Cilia- and flagella-associated protein HOATZ (168 aa).

Residues 142-168 are disordered; it reads PKDKVPKSKEVLSESGLRDQEEVKALE.

Belongs to the HOATZ family. Specifically expressed in tissues with motile cilia and flagella, such as brain ependyma, lung, testis, and oviduct but not in whole brain, liver,kidney, spleen, and eyeball.

It is found in the cytoplasm. Its subcellular location is the cell projection. The protein resides in the cilium. In terms of biological role, required for motile ciliogenesis and flagellar genesis by mediating the maturation of the glycolytic enzyme ENO4. The chain is Cilia- and flagella-associated protein HOATZ from Mus musculus (Mouse).